The primary structure comprises 336 residues: Porphobilinogen deaminase (336 aa).

Cys251 is subject to S-(dipyrrolylmethanemethyl)cysteine. A phosphoserine mark is found at Ser327 and Ser329.

This sequence belongs to the HMBS family. Requires dipyrromethane as cofactor.

The catalysed reaction is 4 porphobilinogen + H2O = hydroxymethylbilane + 4 NH4(+). It participates in porphyrin-containing compound metabolism; protoporphyrin-IX biosynthesis; coproporphyrinogen-III from 5-aminolevulinate: step 2/4. Functionally, tetrapolymerization of the monopyrrole PBG into the hydroxymethylbilane pre-uroporphyrinogen in several discrete steps. This chain is Porphobilinogen deaminase (hem3), found in Schizosaccharomyces pombe (strain 972 / ATCC 24843) (Fission yeast).